Here is a 249-residue protein sequence, read N- to C-terminus: Metallo-beta-lactamase type 2 (249 aa).

Residues 1 to 22 (MLKKIKISLILALGLTSLQAFG) form the signal peptide. Residues histidine 98, histidine 100, aspartate 102, histidine 161, and cysteine 180 each contribute to the Zn(2+) site. Lysine 183 is a substrate binding site. Residue histidine 222 participates in Zn(2+) binding.

Belongs to the metallo-beta-lactamase superfamily. Class-B beta-lactamase family. In terms of assembly, monomer. Zn(2+) is required as a cofactor.

The protein localises to the periplasm. It carries out the reaction a beta-lactam + H2O = a substituted beta-amino acid. In terms of biological role, confers resistance to the different beta-lactams antibiotics (penicillin, cephalosporin and carbapenem) via the hydrolysis of the beta-lactam ring. This is Metallo-beta-lactamase type 2 (blaB3) from Elizabethkingia meningoseptica (Chryseobacterium meningosepticum).